Here is a 191-residue protein sequence, read N- to C-terminus: Probable nicotinate-nucleotide adenylyltransferase (191 aa).

Belongs to the NadD family.

It carries out the reaction nicotinate beta-D-ribonucleotide + ATP + H(+) = deamido-NAD(+) + diphosphate. Its pathway is cofactor biosynthesis; NAD(+) biosynthesis; deamido-NAD(+) from nicotinate D-ribonucleotide: step 1/1. In terms of biological role, catalyzes the reversible adenylation of nicotinate mononucleotide (NaMN) to nicotinic acid adenine dinucleotide (NaAD). This chain is Probable nicotinate-nucleotide adenylyltransferase, found in Oceanobacillus iheyensis (strain DSM 14371 / CIP 107618 / JCM 11309 / KCTC 3954 / HTE831).